Consider the following 92-residue polypeptide: Small ribosomal subunit protein uS19 (92 aa).

This sequence belongs to the universal ribosomal protein uS19 family.

Functionally, protein S19 forms a complex with S13 that binds strongly to the 16S ribosomal RNA. In Bacillus pumilus (strain SAFR-032), this protein is Small ribosomal subunit protein uS19.